The following is a 170-amino-acid chain: Putative zinc finger protein 542 (170 aa).

In terms of domain architecture, KRAB spans Met-1–Pro-42. C2H2-type zinc fingers lie at residues Asn-98–His-120 and Asn-126–His-148. The segment at Tyr-154 to Thr-170 adopts a C2H2-type 3; degenerate zinc-finger fold.

Belongs to the krueppel C2H2-type zinc-finger protein family.

The protein localises to the nucleus. Its function is as follows. May be involved in transcriptional regulation. This Homo sapiens (Human) protein is Putative zinc finger protein 542 (ZNF542P).